The chain runs to 121 residues: Acidic phospholipase A2 PLA-1 (121 aa).

Intrachain disulfides connect C26–C115, C28–C44, C43–C95, C49–C121, C50–C88, C57–C81, and C75–C86. Positions 27, 29, and 31 each coordinate Ca(2+). Residue H47 is part of the active site. Residue D48 participates in Ca(2+) binding. D89 is a catalytic residue.

This sequence belongs to the phospholipase A2 family. Group II subfamily. D49 sub-subfamily. Ca(2+) serves as cofactor. Expressed by the venom gland.

It is found in the secreted. The catalysed reaction is a 1,2-diacyl-sn-glycero-3-phosphocholine + H2O = a 1-acyl-sn-glycero-3-phosphocholine + a fatty acid + H(+). PLA2 catalyzes the calcium-dependent hydrolysis of the 2-acyl groups in 3-sn-phosphoglycerides. The chain is Acidic phospholipase A2 PLA-1 from Eristicophis macmahoni (Leaf-nosed viper).